The chain runs to 244 residues: MKNIKLTVQYDGSKFYGWQKLNDLPSVQLEIEKAVTKMVHQPVKINGAGRTDKGVHAKGQVCNFIVDTDISANQFLMGVNHFTSDSIVIVKSEEMDLDFHARFSAKSKTYKYILCNKYYMEPWFNDYKGHRKYYLDFDLLLKCRDMLIGKHDFTSFVNDLEEDINPVRTIDEITIEKIDDDIVFTFKAESFLRNMVRILVGSMVDVARGRKSIDWLKNALENKDRQSAGITIEPSGLYLMDIEY.

The active-site Nucleophile is aspartate 52. Tyrosine 110 provides a ligand contact to substrate.

The protein belongs to the tRNA pseudouridine synthase TruA family. In terms of assembly, homodimer.

The catalysed reaction is uridine(38/39/40) in tRNA = pseudouridine(38/39/40) in tRNA. In terms of biological role, formation of pseudouridine at positions 38, 39 and 40 in the anticodon stem and loop of transfer RNAs. The chain is tRNA pseudouridine synthase A from Finegoldia magna (strain ATCC 29328 / DSM 20472 / WAL 2508) (Peptostreptococcus magnus).